Reading from the N-terminus, the 187-residue chain is Ribosome-recycling factor (187 aa).

Belongs to the RRF family.

The protein resides in the cytoplasm. Functionally, responsible for the release of ribosomes from messenger RNA at the termination of protein biosynthesis. May increase the efficiency of translation by recycling ribosomes from one round of translation to another. The protein is Ribosome-recycling factor of Roseobacter denitrificans (strain ATCC 33942 / OCh 114) (Erythrobacter sp. (strain OCh 114)).